Here is a 131-residue protein sequence, read N- to C-terminus: MDPHPLTWALVLLGPALALSRAPAPAQEAPEKLCGHHFVRALVRLCGGPRWSPEDGRAVAGGDRELLQWLEGQHLFHGLMASGDPMLVLAPQPPPQASGHHHHRRAAATNPARHCCLSGCTRQDLLTLCPH.

A signal peptide spans 1–26 (MDPHPLTWALVLLGPALALSRAPAPA). 3 disulfides stabilise this stretch: Cys-34/Cys-116, Cys-46/Cys-129, and Cys-115/Cys-120. A propeptide spans 58–103 (AVAGGDRELLQWLEGQHLFHGLMASGDPMLVLAPQPPPQASGHHHH) (c peptide like).

This sequence belongs to the insulin family. In terms of assembly, heterodimer of a B chain and an A chain linked by two disulfide bonds. As to expression, expressed exclusively in prenatal and postnatal Leydig cells.

Its subcellular location is the secreted. Seems to play a role in testicular function. May be a trophic hormone with a role in testicular descent in fetal life. Is a ligand for LGR8 receptor. In Sus scrofa (Pig), this protein is Insulin-like 3 (INSL3).